An 84-amino-acid chain; its full sequence is uncharacterized protein (84 aa).

Residues 7–23 form a helical membrane-spanning segment; it reads AFSGVIALYGGYLYLRL.

It is found in the membrane. This is an uncharacterized protein from Haemophilus influenzae (strain ATCC 51907 / DSM 11121 / KW20 / Rd).